Here is a 156-residue protein sequence, read N- to C-terminus: Small ribosomal subunit protein uS7 (156 aa).

This sequence belongs to the universal ribosomal protein uS7 family. As to quaternary structure, part of the 30S ribosomal subunit. Contacts proteins S9 and S11.

Its function is as follows. One of the primary rRNA binding proteins, it binds directly to 16S rRNA where it nucleates assembly of the head domain of the 30S subunit. Is located at the subunit interface close to the decoding center, probably blocks exit of the E-site tRNA. This Bordetella bronchiseptica (strain ATCC BAA-588 / NCTC 13252 / RB50) (Alcaligenes bronchisepticus) protein is Small ribosomal subunit protein uS7.